The primary structure comprises 205 residues: Thiamine-phosphate synthase (205 aa).

4-amino-2-methyl-5-(diphosphooxymethyl)pyrimidine-binding positions include Q37–K41 and N69. Residues D70 and D89 each coordinate Mg(2+). Residue S108 participates in 4-amino-2-methyl-5-(diphosphooxymethyl)pyrimidine binding. T134–S136 provides a ligand contact to 2-[(2R,5Z)-2-carboxy-4-methylthiazol-5(2H)-ylidene]ethyl phosphate. K137 contributes to the 4-amino-2-methyl-5-(diphosphooxymethyl)pyrimidine binding site. 2-[(2R,5Z)-2-carboxy-4-methylthiazol-5(2H)-ylidene]ethyl phosphate-binding positions include G165 and I185–S186.

It belongs to the thiamine-phosphate synthase family. It depends on Mg(2+) as a cofactor.

It catalyses the reaction 2-[(2R,5Z)-2-carboxy-4-methylthiazol-5(2H)-ylidene]ethyl phosphate + 4-amino-2-methyl-5-(diphosphooxymethyl)pyrimidine + 2 H(+) = thiamine phosphate + CO2 + diphosphate. It carries out the reaction 2-(2-carboxy-4-methylthiazol-5-yl)ethyl phosphate + 4-amino-2-methyl-5-(diphosphooxymethyl)pyrimidine + 2 H(+) = thiamine phosphate + CO2 + diphosphate. The catalysed reaction is 4-methyl-5-(2-phosphooxyethyl)-thiazole + 4-amino-2-methyl-5-(diphosphooxymethyl)pyrimidine + H(+) = thiamine phosphate + diphosphate. It participates in cofactor biosynthesis; thiamine diphosphate biosynthesis; thiamine phosphate from 4-amino-2-methyl-5-diphosphomethylpyrimidine and 4-methyl-5-(2-phosphoethyl)-thiazole: step 1/1. Its function is as follows. Condenses 4-methyl-5-(beta-hydroxyethyl)thiazole monophosphate (THZ-P) and 2-methyl-4-amino-5-hydroxymethyl pyrimidine pyrophosphate (HMP-PP) to form thiamine monophosphate (TMP). The chain is Thiamine-phosphate synthase from Clostridium botulinum (strain Langeland / NCTC 10281 / Type F).